The following is a 198-amino-acid chain: Holliday junction branch migration complex subunit RuvA (198 aa).

Positions 1–63 (MIAYLSGAVR…EDAQLLFGFL (63 aa)) are domain I. The domain II stretch occupies residues 64-142 (DTDSLRLFDL…EHLAAGAPVS (79 aa)). The segment at 143–150 (AGKAALTS) is flexible linker. Positions 150–198 (STAGRDAIEALLALGFREPQVRSVVAELLAADPEQSADALIRKGLGKLR) are domain III.

This sequence belongs to the RuvA family. As to quaternary structure, homotetramer. Forms an RuvA(8)-RuvB(12)-Holliday junction (HJ) complex. HJ DNA is sandwiched between 2 RuvA tetramers; dsDNA enters through RuvA and exits via RuvB. An RuvB hexamer assembles on each DNA strand where it exits the tetramer. Each RuvB hexamer is contacted by two RuvA subunits (via domain III) on 2 adjacent RuvB subunits; this complex drives branch migration. In the full resolvosome a probable DNA-RuvA(4)-RuvB(12)-RuvC(2) complex forms which resolves the HJ.

The protein localises to the cytoplasm. Functionally, the RuvA-RuvB-RuvC complex processes Holliday junction (HJ) DNA during genetic recombination and DNA repair, while the RuvA-RuvB complex plays an important role in the rescue of blocked DNA replication forks via replication fork reversal (RFR). RuvA specifically binds to HJ cruciform DNA, conferring on it an open structure. The RuvB hexamer acts as an ATP-dependent pump, pulling dsDNA into and through the RuvAB complex. HJ branch migration allows RuvC to scan DNA until it finds its consensus sequence, where it cleaves and resolves the cruciform DNA. In Deinococcus geothermalis (strain DSM 11300 / CIP 105573 / AG-3a), this protein is Holliday junction branch migration complex subunit RuvA.